A 476-amino-acid polypeptide reads, in one-letter code: Cysteine--tRNA ligase (476 aa).

Position 30 (C30) interacts with Zn(2+). The short motif at 32-42 (PTVYNYIHIGN) is the 'HIGH' region element. Zn(2+) contacts are provided by C215, H240, and E244. The short motif at 274–278 (KMSKS) is the 'KMSKS' region element. K277 serves as a coordination point for ATP.

Belongs to the class-I aminoacyl-tRNA synthetase family. In terms of assembly, monomer. It depends on Zn(2+) as a cofactor.

The protein localises to the cytoplasm. It catalyses the reaction tRNA(Cys) + L-cysteine + ATP = L-cysteinyl-tRNA(Cys) + AMP + diphosphate. This is Cysteine--tRNA ligase from Lactobacillus helveticus (strain DPC 4571).